Here is a 341-residue protein sequence, read N- to C-terminus: UDP-3-O-(3-hydroxymyristoyl)glucosamine N-acyltransferase (341 aa).

The Proton acceptor role is filled by H239.

This sequence belongs to the transferase hexapeptide repeat family. LpxD subfamily. In terms of assembly, homotrimer.

The enzyme catalyses a UDP-3-O-[(3R)-3-hydroxyacyl]-alpha-D-glucosamine + a (3R)-hydroxyacyl-[ACP] = a UDP-2-N,3-O-bis[(3R)-3-hydroxyacyl]-alpha-D-glucosamine + holo-[ACP] + H(+). It carries out the reaction UDP-3-O-[(3R)-3-hydroxytetradecanoyl]-alpha-D-glucosamine + (3R)-hydroxytetradecanoyl-[ACP] = UDP-2-N,3-O-bis[(3R)-3-hydroxytetradecanoyl]-alpha-D-glucosamine + holo-[ACP] + H(+). It functions in the pathway glycolipid biosynthesis; lipid IV(A) biosynthesis; lipid IV(A) from (3R)-3-hydroxytetradecanoyl-[acyl-carrier-protein] and UDP-N-acetyl-alpha-D-glucosamine: step 3/6. Catalyzes the N-acylation of UDP-3-O-(hydroxytetradecanoyl)glucosamine using 3-hydroxytetradecanoyl-ACP as the acyl donor. Is involved in the biosynthesis of lipid A, a phosphorylated glycolipid that anchors the lipopolysaccharide to the outer membrane of the cell. This Shigella dysenteriae serotype 1 (strain Sd197) protein is UDP-3-O-(3-hydroxymyristoyl)glucosamine N-acyltransferase.